We begin with the raw amino-acid sequence, 178 residues long: MYHQLILMALIGVIMANVVPFSMSNIPEEYKEFIPEEVKNFYKNLSIFLCQILRELASKHATFTNEDAALEALKNKSDKLYQKAVELRNFVKAKIDSLKPDAKAFVDEIIAKVRSLRPEDGQKLDMEKLKQAARDIIAKYEALNEETKEELKATFPNTTKIITNEKFKRIANSFLQKN.

The N-terminal stretch at 1-16 (MYHQLILMALIGVIMA) is a signal peptide. Coiled-coil stretches lie at residues 67–89 (DAAL…ELRN) and 122–154 (QKLD…LKAT).

It belongs to the fatty-acid and retinol-binding protein (FARBP) family. Post-translationally, not glycosylated.

It is found in the secreted. Binds retinol and different fatty acids. This Litomosoides sigmodontis (Filarial nematode worm) protein is Fatty-acid and retinol-binding protein 1.